The primary structure comprises 173 residues: MKTKEIVDDMTMKRAITRITYEIIERNKNLDNIVLAGIKTRGVFIAKRIQERLKQLEGIDVPLGELDTKPFRDDMKVEDDTTNMTANVNDRDVILVDDVLYTGRTIRAAIDNIVSLGRPARVSLAVLVDRGHRELPIRADYVGKNIPTSRSEEIIVHMAEIDGQDAVLLVEGA.

The short motif at Val-93–Thr-105 is the PRPP-binding element.

The protein belongs to the purine/pyrimidine phosphoribosyltransferase family. PyrR subfamily. In terms of assembly, homodimer and homohexamer; in equilibrium.

The catalysed reaction is UMP + diphosphate = 5-phospho-alpha-D-ribose 1-diphosphate + uracil. Regulates transcriptional attenuation of the pyrimidine nucleotide (pyr) operon by binding in a uridine-dependent manner to specific sites on pyr mRNA. This disrupts an antiterminator hairpin in the RNA and favors formation of a downstream transcription terminator, leading to a reduced expression of downstream genes. In terms of biological role, also displays a weak uracil phosphoribosyltransferase activity which is not physiologically significant. This chain is Bifunctional protein PyrR, found in Streptococcus suis (strain 05ZYH33).